The primary structure comprises 256 residues: NAP1-related protein 1 (256 aa).

A coiled-coil region spans residues 23-64 (IDAELVLSIEKLQEIQDDLEKINEKASDEVLEVEQKYNVIRK). The segment at 220 to 256 (LTYFNNDADEEDFDGDDDGDEEGEEDDDDEEEEDGEE) is disordered. The segment covering 226–256 (DADEEDFDGDDDGDEEGEEDDDDEEEEDGEE) has biased composition (acidic residues).

Belongs to the nucleosome assembly protein (NAP) family. As to quaternary structure, can form homomeric and heteromeric protein complexes with NRP2. Binds histones H2A and H2B and associates with chromatin in vivo. As to expression, ubiquitous.

It localises to the cytoplasm. The protein resides in the nucleus. Acts as a histone H2A/H2B chaperone in nucleosome assembly, playing a critical role for the correct expression of genes involved in root proliferation and patterning. Required with NRP2 for the maintenance of cell proliferation and differentiation in postembryonic root growth. Involved in both intramolecular and intermolecular somatic homologous recombination. The sequence is that of NAP1-related protein 1 (NRP1) from Arabidopsis thaliana (Mouse-ear cress).